A 249-amino-acid chain; its full sequence is Phosphate import ATP-binding protein PstB (249 aa).

The ABC transporter domain maps to 4–244; sequence IQTKDLNLYY…PKDKRTEDYI (241 aa). 36–43 serves as a coordination point for ATP; sequence GPSGCGKS.

The protein belongs to the ABC transporter superfamily. Phosphate importer (TC 3.A.1.7) family. In terms of assembly, the complex is composed of two ATP-binding proteins (PstB), two transmembrane proteins (PstC and PstA) and a solute-binding protein (PstS).

The protein resides in the cell membrane. The catalysed reaction is phosphate(out) + ATP + H2O = ADP + 2 phosphate(in) + H(+). Functionally, part of the ABC transporter complex PstSACB involved in phosphate import. Responsible for energy coupling to the transport system. This Clostridium acetobutylicum (strain ATCC 824 / DSM 792 / JCM 1419 / IAM 19013 / LMG 5710 / NBRC 13948 / NRRL B-527 / VKM B-1787 / 2291 / W) protein is Phosphate import ATP-binding protein PstB.